A 444-amino-acid chain; its full sequence is Acyl-CoA 6-desaturase (444 aa).

Over 1-131 (MGKGGNQGEG…DMNLFKTNHV (131 aa)) the chain is Cytoplasmic. Residues 18–95 (VPTFSWEEIQ…LKPLLIGELA (78 aa)) enclose the Cytochrome b5 heme-binding domain. The helical transmembrane segment at 132–152 (FFLLLLAHIIALESIAWFTVF) threads the bilayer. Residues 153–157 (YFGNG) are Lumenal-facing. The chain crosses the membrane as a helical span at residues 158–178 (WISTLITAFVLATSQAQAGWL). The Cytoplasmic segment spans residues 179–264 (QHDYGHLSVY…KYLPYNHQHE (86 aa)). The Histidine box-1 signature appears at 180–184 (HDYGH). The short motif at 217-221 (HFQHH) is the Histidine box-2 element. The helical transmembrane segment at 265–285 (YFFLIGPPLLIPMYFQYQIIM) threads the bilayer. Residues 286–305 (TMIVHKNWVDLAWAISYYIR) lie on the Lumenal side of the membrane. Residues 306–326 (FFITYIPFYGILGALLFLNFI) traverse the membrane as a helical segment. Residues 327–444 (RFLESHWFVW…KLWLDAYLHK (118 aa)) are Cytoplasmic-facing. The short motif at 382–386 (QIEHH) is the Histidine box-3 element.

The protein belongs to the fatty acid desaturase type 1 family.

Its subcellular location is the endoplasmic reticulum membrane. The enzyme catalyses (9Z,12Z)-octadecadienoyl-CoA + 2 Fe(II)-[cytochrome b5] + O2 + 2 H(+) = (6Z,9Z,12Z)-octadecatrienoyl-CoA + 2 Fe(III)-[cytochrome b5] + 2 H2O. The catalysed reaction is (9Z,12Z,15Z)-octadecatrienoyl-CoA + 2 Fe(II)-[cytochrome b5] + O2 + 2 H(+) = (6Z,9Z,12Z,15Z)-octadecatetraenoyl-CoA + 2 Fe(III)-[cytochrome b5] + 2 H2O. It catalyses the reaction (9Z,12Z,15Z,18Z,21Z)-tetracosapentaenoyl-CoA + 2 Fe(II)-[cytochrome b5] + O2 + 2 H(+) = (6Z,9Z,12Z,15Z,18Z,21Z)-tetracosahexaenoyl-CoA + 2 Fe(III)-[cytochrome b5] + 2 H2O. It carries out the reaction (11E)-octadecenoyl-CoA + 2 Fe(II)-[cytochrome b5] + O2 + 2 H(+) = (6Z,11E)-octadecadienoyl-CoA + 2 Fe(III)-[cytochrome b5] + 2 H2O. The enzyme catalyses (11Z,14Z)-eicosadienoyl-CoA + 2 Fe(II)-[cytochrome b5] + O2 + 2 H(+) = (8Z,11Z,14Z)-eicosatrienoyl-CoA + 2 Fe(III)-[cytochrome b5] + 2 H2O. The catalysed reaction is (11Z,14Z,17Z)-eicosatrienoyl-CoA + 2 Fe(II)-[cytochrome b5] + O2 + 2 H(+) = (8Z,11Z,14Z,17Z)-eicosatetraenoyl-CoA + 2 Fe(III)-[cytochrome b5] + 2 H2O. The protein operates within lipid metabolism; polyunsaturated fatty acid biosynthesis. Its function is as follows. Involved in the biosynthesis of highly unsaturated fatty acids (HUFA) from the essential polyunsaturated fatty acids (PUFA) linoleic acid (LA) (18:2n-6) and alpha-linolenic acid (ALA) (18:3n-3) precursors, acting as a fatty acyl-coenzyme A (CoA) desaturase that introduces a cis double bond at carbon 6 of the fatty acyl chain. Catalyzes the first and rate limiting step in this pathway which is the desaturation of LA (18:2n-6) and ALA (18:3n-3) into gamma-linoleate (GLA) (18:3n-6) and stearidonate (18:4n-3), respectively. Subsequently, in the biosynthetic pathway of HUFA n-3 series, it desaturates tetracosapentaenoate (24:5n-3) to tetracosahexaenoate (24:6n-3), which is then converted to docosahexaenoate (DHA)(22:6n-3), an important lipid for nervous system function. It can also desaturate (11E)-octadecenoate (trans-vaccenoate) at carbon 6 generating (6Z,11E)-octadecadienoate. In addition to Delta-6 activity, this enzyme exhibits Delta-8 activity with slight biases toward n-3 fatty acyl-CoA substrates. The protein is Acyl-CoA 6-desaturase (FADS2) of Pongo abelii (Sumatran orangutan).